The sequence spans 357 residues: Eukaryotic translation initiation factor 3 subunit F (357 aa).

Residues 30–169 (VHIQPQAVFS…TKAYISAPVA (140 aa)) enclose the MPN domain. The disordered stretch occupies residues 309–357 (VGGDKEGGEKGKDGEDGGRGGRGGKRGGGGRGGHRGEPREPREPREPAE). Composition is skewed to basic and acidic residues over residues 311-327 (GDKE…DGGR) and 342-357 (HRGE…EPAE).

The protein belongs to the eIF-3 subunit F family. Component of the eukaryotic translation initiation factor 3 (eIF-3) complex.

The protein resides in the cytoplasm. Functionally, component of the eukaryotic translation initiation factor 3 (eIF-3) complex, which is involved in protein synthesis of a specialized repertoire of mRNAs and, together with other initiation factors, stimulates binding of mRNA and methionyl-tRNAi to the 40S ribosome. The eIF-3 complex specifically targets and initiates translation of a subset of mRNAs involved in cell proliferation. The protein is Eukaryotic translation initiation factor 3 subunit F of Chaetomium globosum (strain ATCC 6205 / CBS 148.51 / DSM 1962 / NBRC 6347 / NRRL 1970) (Soil fungus).